Reading from the N-terminus, the 217-residue chain is dITP/XTP pyrophosphatase (217 aa).

7–12 lines the substrate pocket; sequence SRNKKK. The active-site Proton acceptor is the Asp72. Asp72 is a binding site for Mg(2+). Substrate is bound by residues Ser73, 163 to 166, Lys195, and 200 to 201; these read FGYD and HR.

Belongs to the HAM1 NTPase family. In terms of assembly, homodimer. It depends on Mg(2+) as a cofactor.

The enzyme catalyses XTP + H2O = XMP + diphosphate + H(+). It catalyses the reaction dITP + H2O = dIMP + diphosphate + H(+). The catalysed reaction is ITP + H2O = IMP + diphosphate + H(+). In terms of biological role, pyrophosphatase that catalyzes the hydrolysis of nucleoside triphosphates to their monophosphate derivatives, with a high preference for the non-canonical purine nucleotides XTP (xanthosine triphosphate), dITP (deoxyinosine triphosphate) and ITP. Seems to function as a house-cleaning enzyme that removes non-canonical purine nucleotides from the nucleotide pool, thus preventing their incorporation into DNA/RNA and avoiding chromosomal lesions. The chain is dITP/XTP pyrophosphatase from Corynebacterium jeikeium (strain K411).